The chain runs to 632 residues: tRNA uridine 5-carboxymethylaminomethyl modification enzyme MnmG (632 aa).

Residues 13-18, Val-125, and Ser-180 each bind FAD; that span reads GGGHAG. 273 to 287 is a binding site for NAD(+); it reads GPRYCPSIEDKVMRF. Gln-370 contacts FAD.

Belongs to the MnmG family. As to quaternary structure, homodimer. Heterotetramer of two MnmE and two MnmG subunits. It depends on FAD as a cofactor.

The protein localises to the cytoplasm. NAD-binding protein involved in the addition of a carboxymethylaminomethyl (cmnm) group at the wobble position (U34) of certain tRNAs, forming tRNA-cmnm(5)s(2)U34. In Proteus mirabilis (strain HI4320), this protein is tRNA uridine 5-carboxymethylaminomethyl modification enzyme MnmG.